Reading from the N-terminus, the 1148-residue chain is Protein pianissimo A (1148 aa).

A compositionally biased stretch (low complexity) spans 1-34 (MTSSDSSVNTTSSSFGNISISSPNHSSSTPPLNN). The disordered stretch occupies residues 1–41 (MTSSDSSVNTTSSSFGNISISSPNHSSSTPPLNNGNGNNVS). One can recognise an N-terminal Ras-GEF domain in the interval 803-914 (KVSALSLNVL…STSGVYLPPH (112 aa)).

It belongs to the RICTOR family. As to quaternary structure, part of a complex, TORC2, consisting of tor, lst8, piaA and ripA. Additional proteins, such as 14-3-3 and heat-shock proteins, may also belong to the TORC2 complex.

It is found in the cytoplasm. In terms of biological role, regulates cell growth, chemotaxis, signal relay and the actin cytoskeleton. Required for chemoattractant receptor and G protein-mediated activation of the 12 transmembrane domain adenylyl cyclase. Functions as a part of protein complex TORC2. TORC2, is presumed to be indirectly negatively modulated by rapamycin and regulates actin polarization. TORC2, but not TORC1, negatively regulates phagocytosis. This protein and dagA protein CRAC, a cytosolic regulator, are both essential for activation of the enzyme adenylyl cyclase. This protein and CRAC do not function redundantly. Both proteins are integral components of the adenylyl cyclase activation pathway. The protein is Protein pianissimo A (piaA) of Dictyostelium discoideum (Social amoeba).